The primary structure comprises 134 residues: Proline-rich protein 4 (134 aa).

An N-terminal signal peptide occupies residues 1–16 (MLLVLLSVVLLALSSA). The tract at residues 28 to 134 (FTFTIPDVED…ARHPQEQPLW (107 aa)) is disordered. Over residues 47–59 (QRPPPEGLLPRPP) the composition is skewed to pro residues. Residues 110-119 (VSLQEASSFF) are compositionally biased toward polar residues. Residues 120–134 (QRDRPARHPQEQPLW) are compositionally biased toward basic and acidic residues.

In terms of tissue distribution, abundantly expressed in lacrimal gland where it is found in the acinar cells but not in the intralobular ducts. Also found in the submandibular gland, the parotid and sublingual glands.

It is found in the secreted. In Homo sapiens (Human), this protein is Proline-rich protein 4 (PRR4).